Reading from the N-terminus, the 614-residue chain is Subtilin transport ATP-binding protein SpaT (614 aa).

5 helical membrane-spanning segments follow: residues 34 to 54 (FLKL…SLYI), 69 to 89 (VSIV…SELI), 147 to 167 (IIQA…SIAF), 175 to 195 (VSLL…KIGQ), and 267 to 287 (IAVQ…AFAG). The ABC transmembrane type-1 domain occupies 34–320 (FLKLIRFSII…IMTSIYSIYN (287 aa)). An ABC transporter domain is found at 353–593 (VVFQNVSFIY…CPLYKKMDES (241 aa)). Residue 387–394 (GPNGSGKK) participates in ATP binding.

The protein belongs to the ABC transporter superfamily.

The protein resides in the cell membrane. Probably implicated in the export process of the lantibiotic subtilin. The sequence is that of Subtilin transport ATP-binding protein SpaT (spaT) from Bacillus subtilis.